We begin with the raw amino-acid sequence, 192 residues long: Fe/S biogenesis protein NfuA (192 aa).

2 residues coordinate [4Fe-4S] cluster: C149 and C152.

It belongs to the NfuA family. As to quaternary structure, homodimer. It depends on [4Fe-4S] cluster as a cofactor.

Involved in iron-sulfur cluster biogenesis. Binds a 4Fe-4S cluster, can transfer this cluster to apoproteins, and thereby intervenes in the maturation of Fe/S proteins. Could also act as a scaffold/chaperone for damaged Fe/S proteins. This chain is Fe/S biogenesis protein NfuA, found in Colwellia psychrerythraea (strain 34H / ATCC BAA-681) (Vibrio psychroerythus).